The primary structure comprises 282 residues: sn-glycerol-3-phosphate transport system permease protein UgpE (282 aa).

The next 6 membrane-spanning stretches (helical) occupy residues 14–34, 86–106, 112–132, 146–168, 201–221, and 248–268; these read LILILGIIIVAFPIYYTFVAS, MAIAVGKIIISFMSAFAIVFF, MFFFWMIFITLMLPVEVRILP, YAGLTLPLMASATATFLFRQFFL, IAALFVILSIYGWTQYLWPLL, and WNYVMVTAILAIIPPILVVVL. In terms of domain architecture, ABC transmembrane type-1 spans 78–269; that stretch reads LWNSFVVAMA…IPPILVVVLM (192 aa).

Belongs to the binding-protein-dependent transport system permease family. The complex is composed of two ATP-binding proteins (UgpC), two transmembrane proteins (UgpA and UgpE) and a solute-binding protein (UgpB).

It localises to the cell inner membrane. Its function is as follows. Part of the ABC transporter complex UgpBAEC involved in sn-glycerol-3-phosphate (G3P) import. Probably responsible for the translocation of the substrate across the membrane. This chain is sn-glycerol-3-phosphate transport system permease protein UgpE (ugpE), found in Brucella suis biovar 1 (strain 1330).